A 394-amino-acid chain; its full sequence is Acetyl-CoA acetyltransferase (394 aa).

The Acyl-thioester intermediate role is filled by Cys89. Catalysis depends on proton acceptor residues His350 and Cys380.

It belongs to the thiolase-like superfamily. Thiolase family. In terms of assembly, homotetramer.

It is found in the cytoplasm. The catalysed reaction is 2 acetyl-CoA = acetoacetyl-CoA + CoA. The protein operates within biopolymer metabolism; poly-(R)-3-hydroxybutanoate biosynthesis. Its pathway is metabolic intermediate biosynthesis; (R)-mevalonate biosynthesis; (R)-mevalonate from acetyl-CoA: step 1/3. This Thiocystis violacea protein is Acetyl-CoA acetyltransferase.